The primary structure comprises 225 residues: MNSMEFPLLDRTTPNSVISTTPNDLSNWSRLSSLWPLLYGTSCCFIEFASLIGSRFDFDRYGLVPRSSPRQADLILTAGTVTMKMAPSLVRLYEQMPEPKYVIAMGACTITGGMFSTDSYSTVRGVDKLIPVDVYLPGCPPKPEAIIDAITKLRKKVSREIYEDRIASQQEDRCFTTNHKFRVGRSIHTGNYDQELLYQSPSTSEILSETLFKYKSSLSSHELVN.

Residues Cys43, Cys44, Cys108, and Cys139 each contribute to the [4Fe-4S] cluster site.

The protein belongs to the complex I 20 kDa subunit family. As to quaternary structure, NDH is composed of at least 16 different subunits, 5 of which are encoded in the nucleus. [4Fe-4S] cluster serves as cofactor.

The protein resides in the plastid. It localises to the chloroplast thylakoid membrane. The catalysed reaction is a plastoquinone + NADH + (n+1) H(+)(in) = a plastoquinol + NAD(+) + n H(+)(out). The enzyme catalyses a plastoquinone + NADPH + (n+1) H(+)(in) = a plastoquinol + NADP(+) + n H(+)(out). NDH shuttles electrons from NAD(P)H:plastoquinone, via FMN and iron-sulfur (Fe-S) centers, to quinones in the photosynthetic chain and possibly in a chloroplast respiratory chain. The immediate electron acceptor for the enzyme in this species is believed to be plastoquinone. Couples the redox reaction to proton translocation, and thus conserves the redox energy in a proton gradient. The protein is NAD(P)H-quinone oxidoreductase subunit K, chloroplastic of Amborella trichopoda.